The chain runs to 183 residues: Ribosome rescue factor SmrB (183 aa).

A Smr domain is found at 98–173; that stretch reads LDLHGLTQLQ…GDAALLVLIE (76 aa).

It belongs to the SmrB family. In terms of assembly, associates with collided ribosomes, but not with correctly translating polysomes.

Functionally, acts as a ribosome collision sensor. Detects stalled/collided disomes (pairs of ribosomes where the leading ribosome is stalled and a second ribosome has collided with it) and endonucleolytically cleaves mRNA at the 5' boundary of the stalled ribosome. Stalled/collided disomes form a new interface (primarily via the 30S subunits) that binds SmrB. Cleaved mRNA becomes available for tmRNA ligation, leading to ribosomal subunit dissociation and rescue of stalled ribosomes. The polypeptide is Ribosome rescue factor SmrB (Salmonella agona (strain SL483)).